The primary structure comprises 205 residues: Heat shock protein beta-1 (205 aa).

Arginine 12 is modified (omega-N-methylarginine). A Phosphoserine; by MAPKAPK2 and MAPKAPK3 modification is found at serine 15. Phosphoserine is present on residues serine 26 and serine 65. Positions 70–205 are interaction with TGFB1I1; the sequence is APAYSRALSR…AAKSDETAAK (136 aa). A sHSP domain is found at 76 to 184; sequence ALSRQLSSGV…QSNEITIPVT (109 aa). Phosphoserine; by MAPKAPK2, MAPKAPK3 and MAPKAPK5 is present on residues serine 78 and serine 82. 3 positions are modified to phosphoserine: serine 83, serine 86, and serine 98. The residue at position 123 (lysine 123) is an N6-acetyllysine. A Phosphothreonine modification is found at threonine 174. Phosphoserine is present on residues serine 176 and serine 199.

The protein belongs to the small heat shock protein (HSP20) family. As to quaternary structure, homooligomer. Homodimer; becomes monomeric upon activation. Heterooligomer; with HSPB6. Associates with alpha- and beta-tubulin. Interacts with TGFB1I1. Interacts with CRYAB. Interacts with HSPB8. Interacts with HSPBAP1. Post-translationally, phosphorylated upon exposure to protein kinase C activators and heat shock. Phosphorylation by MAPKAPK2 and MAPKAPK3 in response to stress dissociates HSPB1 from large small heat-shock protein (sHsps) oligomers and impairs its chaperone activity and ability to protect against oxidative stress effectively. Phosphorylation by MAPKAPK5 in response to PKA stimulation induces F-actin rearrangement. In terms of tissue distribution, detected in all tissues tested: skeletal muscle, heart, aorta, large intestine, small intestine, stomach, esophagus, bladder, adrenal gland, thyroid, pancreas, testis, adipose tissue, kidney, liver, spleen, cerebral cortex, blood serum and cerebrospinal fluid. Highest levels are found in the heart and in tissues composed of striated and smooth muscle.

It localises to the cytoplasm. The protein resides in the nucleus. The protein localises to the cytoskeleton. It is found in the spindle. Its function is as follows. Small heat shock protein which functions as a molecular chaperone probably maintaining denatured proteins in a folding-competent state. Plays a role in stress resistance and actin organization. Through its molecular chaperone activity may regulate numerous biological processes including the phosphorylation and the axonal transport of neurofilament proteins. This is Heat shock protein beta-1 (HSPB1) from Homo sapiens (Human).